The following is a 1017-amino-acid chain: Probable isoleucine--tRNA ligase, cytoplasmic (1017 aa).

The 'HIGH' region motif lies at 45 to 55 (PFATGLPHYGH). A 'KMSKS' region motif is present at residues 609–613 (KMSKR). Lys-612 is an ATP binding site.

This sequence belongs to the class-I aminoacyl-tRNA synthetase family.

It is found in the cytoplasm. The catalysed reaction is tRNA(Ile) + L-isoleucine + ATP = L-isoleucyl-tRNA(Ile) + AMP + diphosphate. The chain is Probable isoleucine--tRNA ligase, cytoplasmic from Encephalitozoon cuniculi (strain GB-M1) (Microsporidian parasite).